The chain runs to 143 residues: Large ribosomal subunit protein uL11 (143 aa).

Belongs to the universal ribosomal protein uL11 family. As to quaternary structure, part of the ribosomal stalk of the 50S ribosomal subunit. Interacts with L10 and the large rRNA to form the base of the stalk. L10 forms an elongated spine to which L12 dimers bind in a sequential fashion forming a multimeric L10(L12)X complex. One or more lysine residues are methylated.

Functionally, forms part of the ribosomal stalk which helps the ribosome interact with GTP-bound translation factors. In Aromatoleum aromaticum (strain DSM 19018 / LMG 30748 / EbN1) (Azoarcus sp. (strain EbN1)), this protein is Large ribosomal subunit protein uL11.